The sequence spans 349 residues: Glycosyltransferase 8 domain-containing protein 2 (349 aa).

Topologically, residues 1 to 6 are cytoplasmic; it reads MALLRK. The helical; Signal-anchor for type II membrane protein transmembrane segment at 7 to 24 threads the bilayer; sequence INQVLLFLLIVTLCVILY. At 25–349 the chain is on the lumenal side; it reads KKVHKGTVSK…AGIFKLNHHS (325 aa). N-linked (GlcNAc...) asparagine glycosylation is present at N234.

This sequence belongs to the glycosyltransferase 8 family.

Its subcellular location is the membrane. The sequence is that of Glycosyltransferase 8 domain-containing protein 2 (GLT8D2) from Macaca fascicularis (Crab-eating macaque).